The chain runs to 509 residues: Cytochrome P450 monooxygenase ORF9 (509 aa).

Transmembrane regions (helical) follow at residues 20 to 40 (IYVLPFVISAAALCYFIGLIV) and 309 to 329 (LIIAGGETVATFLAATVYYLL). An N-linked (GlcNAc...) asparagine glycan is attached at Asn353. Residue Cys448 participates in heme binding.

The protein belongs to the cytochrome P450 family. The cofactor is heme.

It is found in the membrane. It participates in sesquiterpene biosynthesis. Functionally, cytochrome P450 monooxygenase; part of the gene cluster that mediates the biosynthesis of PR-toxin, a bicyclic sesquiterpene belonging to the eremophilane class and acting as a mycotoxin. The first step of the pathway is catalyzed by the aristolochene synthase which performs the cyclization of trans,trans-farnesyl diphosphate (FPP) to the bicyclic sesquiterpene aristolochene. Following the formation of aristolochene, the non-oxygenated aristolochene is converted to the trioxygenated intermediate eremofortin B, via 7-epi-neopetasone. This conversion appears to involve three enzymes, a hydroxysterol oxidase-like enzyme, the quinone-oxidase prx3 that forms the quinone-type-structure in the bicyclic nucleus of aristolochene with the C8-oxo group and the C-3 hydroxyl group, and the P450 monooxygenase ORF6 that introduces the epoxide at the double bond between carbons 1 and 2. No monoxy or dioxy-intermediates have been reported to be released to the broth, so these three early oxidative reactions may be coupled together. Eremofortin B is further oxidized by another P450 monooxygenase, that introduces a second epoxide between carbons 7 and 11 prior to acetylation to eremofortin A by the acetyltransferase ORF8. The second epoxidation may be performed by a second P450 monooxygenase. After the acetylation step, eremofortin A is converted to eremofortin C and then to PR-toxin. First the conversion of eremofortin A to eremofortin C proceeds by oxidation of the side chain of the molecule at C-12 and is catalyzed by the short-chain oxidoreductase prx1. The cytochrome P450 monooxygenase ORF6 is probably also involved in this step. The primary alcohol formed at C-12 is finally oxidized by the short-chain alcohol dehydrogenase prx4 that forms PR-toxin. The sequence is that of Cytochrome P450 monooxygenase ORF9 from Penicillium roqueforti (strain FM164).